Consider the following 228-residue polypeptide: Ribose-5-phosphate isomerase A (228 aa).

Substrate-binding positions include 32 to 35 (TGST), 85 to 88 (DGAD), and 98 to 101 (KGGG). Glutamate 107 serves as the catalytic Proton acceptor. Lysine 125 contributes to the substrate binding site.

Belongs to the ribose 5-phosphate isomerase family. Homodimer.

It catalyses the reaction aldehydo-D-ribose 5-phosphate = D-ribulose 5-phosphate. It participates in carbohydrate degradation; pentose phosphate pathway; D-ribose 5-phosphate from D-ribulose 5-phosphate (non-oxidative stage): step 1/1. In terms of biological role, catalyzes the reversible conversion of ribose-5-phosphate to ribulose 5-phosphate. The protein is Ribose-5-phosphate isomerase A of Cupriavidus taiwanensis (strain DSM 17343 / BCRC 17206 / CCUG 44338 / CIP 107171 / LMG 19424 / R1) (Ralstonia taiwanensis (strain LMG 19424)).